The chain runs to 282 residues: PAK4-inhibitor INKA1 (282 aa).

Disordered regions lie at residues 21 to 50 (RDTG…QFRA) and 92 to 127 (GFSE…FSVS). Inka box stretches follow at residues 163–200 (EAED…ELPE) and 256–282 (PADI…VSYL).

The protein belongs to the INKA family. In terms of assembly, interacts with PAK4. In terms of tissue distribution, expressed in tissues of the developing head during neurulation.

The protein resides in the nucleus. Its subcellular location is the cytoplasm. Inhibitor of the serine/threonine-protein kinase PAK4. Acts by binding PAK4 in a substrate-like manner, inhibiting the protein kinase activity. The polypeptide is PAK4-inhibitor INKA1 (Mus musculus (Mouse)).